The following is a 226-amino-acid chain: 2-C-methyl-D-erythritol 4-phosphate cytidylyltransferase (226 aa).

This sequence belongs to the IspD/TarI cytidylyltransferase family. IspD subfamily.

The catalysed reaction is 2-C-methyl-D-erythritol 4-phosphate + CTP + H(+) = 4-CDP-2-C-methyl-D-erythritol + diphosphate. It functions in the pathway isoprenoid biosynthesis; isopentenyl diphosphate biosynthesis via DXP pathway; isopentenyl diphosphate from 1-deoxy-D-xylulose 5-phosphate: step 2/6. In terms of biological role, catalyzes the formation of 4-diphosphocytidyl-2-C-methyl-D-erythritol from CTP and 2-C-methyl-D-erythritol 4-phosphate (MEP). The protein is 2-C-methyl-D-erythritol 4-phosphate cytidylyltransferase of Microcystis aeruginosa (strain NIES-843 / IAM M-2473).